Reading from the N-terminus, the 359-residue chain is uncharacterized protein (359 aa).

This is an uncharacterized protein from Dictyostelium discoideum (Social amoeba).